The primary structure comprises 86 residues: Large ribosomal subunit protein bL27 (86 aa).

Positions 1–21 (MAHHKGGGSSRNGKDSNPQYL) are disordered.

The protein belongs to the bacterial ribosomal protein bL27 family.

This chain is Large ribosomal subunit protein bL27, found in Coprothermobacter proteolyticus (strain ATCC 35245 / DSM 5265 / OCM 4 / BT).